We begin with the raw amino-acid sequence, 354 residues long: Probable disease resistance protein At5g45490 (354 aa).

Positions 33 to 53 (AKGNLEKKRDDNEEEERLKTE) form a coiled coil. One can recognise an NB-ARC domain in the interval 45–122 (EEEERLKTES…VYAPRVWVSM (78 aa)). 91-98 (GEYGVGKT) is a binding site for ATP. The interval 328-354 (DDEVGPVGSTHGQTDSSNRQPANQASS) is disordered. Positions 337-354 (THGQTDSSNRQPANQASS) are enriched in polar residues.

Possible disease resistance protein. The protein is Probable disease resistance protein At5g45490 of Arabidopsis thaliana (Mouse-ear cress).